The chain runs to 252 residues: 5-oxoprolinase subunit A (252 aa).

It belongs to the LamB/PxpA family. As to quaternary structure, forms a complex composed of PxpA, PxpB and PxpC.

It catalyses the reaction 5-oxo-L-proline + ATP + 2 H2O = L-glutamate + ADP + phosphate + H(+). Catalyzes the cleavage of 5-oxoproline to form L-glutamate coupled to the hydrolysis of ATP to ADP and inorganic phosphate. The polypeptide is 5-oxoprolinase subunit A (Staphylococcus saprophyticus subsp. saprophyticus (strain ATCC 15305 / DSM 20229 / NCIMB 8711 / NCTC 7292 / S-41)).